A 131-amino-acid polypeptide reads, in one-letter code: Profilin-1 (131 aa).

C13 and C115 are oxidised to a cystine. Residues 81 to 97 (AVIRGKKGSGGITVKKT) carry the Involved in PIP2 interaction motif. T111 is modified (phosphothreonine).

It belongs to the profilin family. Multimer. Occurs in many kinds of cells as a complex with monomeric actin in a 1:1 ratio. Post-translationally, phosphorylated by MAP kinases. Pollen specific.

It is found in the cytoplasm. Its subcellular location is the cytoskeleton. Binds to actin and affects the structure of the cytoskeleton. At high concentrations, profilin prevents the polymerization of actin, whereas it enhances it at low concentrations. By binding to PIP2, it inhibits the formation of IP3 and DG. The protein is Profilin-1 (PRO1) of Zea mays (Maize).